The chain runs to 557 residues: Arginine--tRNA ligase (557 aa).

Residues 132–142 carry the 'HIGH' region motif; sequence ANPTGDLHLGH.

The protein belongs to the class-I aminoacyl-tRNA synthetase family. In terms of assembly, monomer.

The protein resides in the cytoplasm. The catalysed reaction is tRNA(Arg) + L-arginine + ATP = L-arginyl-tRNA(Arg) + AMP + diphosphate. This is Arginine--tRNA ligase from Bacillus pumilus (strain SAFR-032).